We begin with the raw amino-acid sequence, 732 residues long: Elongation factor 2 (732 aa).

A tr-type G domain is found at 19-260 (ERIRNIGIAA…MVVRHLPSPI (242 aa)). Residues 28–35 (AHIDHGKT), 94–98 (DTPGH), and 148–151 (NKVD) each bind GTP. H597 bears the Diphthamide mark.

It belongs to the TRAFAC class translation factor GTPase superfamily. Classic translation factor GTPase family. EF-G/EF-2 subfamily.

The protein resides in the cytoplasm. Its function is as follows. Catalyzes the GTP-dependent ribosomal translocation step during translation elongation. During this step, the ribosome changes from the pre-translocational (PRE) to the post-translocational (POST) state as the newly formed A-site-bound peptidyl-tRNA and P-site-bound deacylated tRNA move to the P and E sites, respectively. Catalyzes the coordinated movement of the two tRNA molecules, the mRNA and conformational changes in the ribosome. This is Elongation factor 2 (fusA) from Pyrococcus furiosus (strain ATCC 43587 / DSM 3638 / JCM 8422 / Vc1).